A 339-amino-acid chain; its full sequence is MAQYKGAASEAGRAMHLMKKREKQREQMEQMKQRIAEENIMKSNIDKKFSAHYDAVEAELKSSTVGLVTLNDMKAKQEALVKEREKQLAKKEQSKELQLKLEKLREKERKKEAKRKISSLSFTLEEEEEGVEEEEEMAMYEEELEREEITTKKKKLGKNPDVDTSFLPDRDREEEENRLREELRQEWEAKQEKIKSEEIEITFSYWDGSGHRRTVKMKKGNTMQQFLQKALEILRKDFSELRSAGVEQLMYIKEDLIIPHHHSFYDFIVTKARGKSGPLFNFDVHDDVRLLSDATVEKDESHAGKVVLRSWYEKNKHIFPASRWEPYDPEKKWDKYTIR.

A disordered region spans residues 1-31; that stretch reads MAQYKGAASEAGRAMHLMKKREKQREQMEQM. A2 is subject to N-acetylalanine. A Glycyl lysine isopeptide (Lys-Gly) (interchain with G-Cter in SUMO2) cross-link involves residue K100. Residues 150 to 177 are disordered; sequence TTKKKKLGKNPDVDTSFLPDRDREEEEN. Residues 152-155 carry the Nuclear localization signal motif; that stretch reads KKKK. The segment covering 168 to 177 has biased composition (basic and acidic residues); sequence PDRDREEEEN.

It belongs to the FAM50 family. In terms of assembly, interacts with EFTUD2, a component of the spliceosome U5 complex. Interacts with DDX41, a component of the spliceosome C complex. As to expression, widely expressed in embryonic and adult tissues.

It is found in the nucleus. Probably involved in the regulation of pre-mRNA splicing. The sequence is that of Protein FAM50A (Fam50a) from Mus musculus (Mouse).